The following is a 386-amino-acid chain: L-arabinitol 4-dehydrogenase (386 aa).

The Zn(2+) site is built by C55, H80, E81, C110, C113, C116, C124, and E165. NAD(+)-binding positions include P192–I193, D213, R218, I293, and Q317–R319.

It belongs to the zinc-containing alcohol dehydrogenase family. Homotetramer. Zn(2+) is required as a cofactor.

The enzyme catalyses L-arabinitol + NAD(+) = L-xylulose + NADH + H(+). It functions in the pathway carbohydrate degradation; L-arabinose degradation via L-arabinitol; D-xylulose 5-phosphate from L-arabinose (fungal route): step 2/5. Catalyzes the NAD-dependent oxidation of L-arabinitol to L-xylulose in the fungal L-arabinose catabolic pathway. L-arabinose catabolism is important for using plant material as a carbon source. Not active with NADP as cosubstrate. The sequence is that of L-arabinitol 4-dehydrogenase (ladA) from Aspergillus niger (strain ATCC MYA-4892 / CBS 513.88 / FGSC A1513).